The chain runs to 901 residues: PGC-1 and ERR-induced regulator in muscle protein 1 (901 aa).

Disordered stretches follow at residues 29–511, 564–671, and 731–752; these read QAGL…MPAS, SLEG…MGPG, and RHQEGRSQAPLLKAGSVPAPPP. Residues 100–112 show a composition bias toward polar residues; sequence GQQTPSTSAQSEA. Low complexity predominate over residues 157–178; that stretch reads GEPAGSPESPVHSAAPQRSPGS. 5 stretches are compositionally biased toward polar residues: residues 267-276, 347-379, 387-418, 426-457, and 465-484; these read LSTSVSTTEQ, DESQSTSAFNAQPNEPQSTPTFSPQPDEPQSTP, EPQSTSAFNAQPNEPQSTLAFSPQPDEPQSTP, EPQSTPAFNVQPNEPQSTPAFSPQPNEPQSTP, and EPQSTPAFNTQPNEPQSTPT. Low complexity predominate over residues 608–624; the sequence is PSSEEPGSGEVSGPLSP.

It is found in the cytoplasm. The protein resides in the nucleus. Functionally, regulates the expression of selective PPARGC1A/B and ESRRA/B/G target genes with roles in glucose and lipid metabolism, energy transfer, contractile function, muscle mitochondrial biogenesis and oxidative capacity. Required for the efficient induction of MT-CO2, MT-CO3, COX4I1, TFB1M, TFB2M, POLRMT and SIRT3 by PPARGC1A. Positively regulates the PPARGC1A/ESRRG-induced expression of CKMT2, TNNI3 and SLC2A4 and negatively regulates the PPARGC1A/ESRRG-induced expression of PDK4. The chain is PGC-1 and ERR-induced regulator in muscle protein 1 (PERM1) from Bos taurus (Bovine).